Consider the following 229-residue polypeptide: 2-C-methyl-D-erythritol 4-phosphate cytidylyltransferase (229 aa).

It belongs to the IspD/TarI cytidylyltransferase family. IspD subfamily.

The catalysed reaction is 2-C-methyl-D-erythritol 4-phosphate + CTP + H(+) = 4-CDP-2-C-methyl-D-erythritol + diphosphate. It functions in the pathway isoprenoid biosynthesis; isopentenyl diphosphate biosynthesis via DXP pathway; isopentenyl diphosphate from 1-deoxy-D-xylulose 5-phosphate: step 2/6. In terms of biological role, catalyzes the formation of 4-diphosphocytidyl-2-C-methyl-D-erythritol from CTP and 2-C-methyl-D-erythritol 4-phosphate (MEP). The polypeptide is 2-C-methyl-D-erythritol 4-phosphate cytidylyltransferase (Neisseria gonorrhoeae (strain ATCC 700825 / FA 1090)).